The chain runs to 264 residues: MAIYFIGLGLYDEKDITLKGLETARKCDLVFAEFYTSLLAGTTLDKIEELIGKPIRRLSREEVELQFERIVLSEAKGKDVAFLTAGDPMVATTHSDLRIRAKEMGIESYVIHAPSIYSAIAITGLQVYKFGKSATVAYPEKNWFPTSHYDVIRENKERGLHTMLFLDIKADQNRYMTANEAMEILLQVEEMKGEGVFTPDTLVVVLARAGSLNPTLKAGYVRDMLNEDFGRQPHVMVVPGRLHIVEAEYLVTFAGAPRKILDEV.

Residues L10, D87, V90, 115 to 116 (SI), L166, A209, and H234 each bind S-adenosyl-L-methionine.

This sequence belongs to the diphthine synthase family. As to quaternary structure, homodimer.

The catalysed reaction is 2-[(3S)-amino-3-carboxypropyl]-L-histidyl-[translation elongation factor 2] + 3 S-adenosyl-L-methionine = diphthine-[translation elongation factor 2] + 3 S-adenosyl-L-homocysteine + 3 H(+). The protein operates within protein modification; peptidyl-diphthamide biosynthesis. Its function is as follows. S-adenosyl-L-methionine-dependent methyltransferase that catalyzes the trimethylation of the amino group of the modified target histidine residue in translation elongation factor 2 (EF-2), to form an intermediate called diphthine. The three successive methylation reactions represent the second step of diphthamide biosynthesis. The polypeptide is Diphthine synthase (Thermococcus onnurineus (strain NA1)).